A 54-amino-acid chain; its full sequence is Putative collagen-like domain-containing protein 065L (54 aa).

Residues 1–54 (MRGLEAPGAVGPTGPSGAPGSQGPDGDVGGMGPEGPKGDDGPVGPKGPQGAAIF) are disordered. Positions 7–51 (PGAVGPTGPSGAPGSQGPDGDVGGMGPEGPKGDDGPVGPKGPQGA) constitute a Collagen-like domain. Positions 26-35 (GDVGGMGPEG) are enriched in gly residues. A compositionally biased stretch (low complexity) spans 42–54 (PVGPKGPQGAAIF).

The chain is Putative collagen-like domain-containing protein 065L from Dryophytes versicolor (chameleon treefrog).